Consider the following 315-residue polypeptide: Zinc metalloproteinase nas-4 (315 aa).

The first 20 residues, 1–20 (MMTIQRYSLVFCAIFATCWT), serve as a signal peptide directing secretion. N-linked (GlcNAc...) asparagine glycosylation occurs at N71. The region spanning 95 to 290 (NAIKQIYRRW…RKINKLYNCP (196 aa)) is the Peptidase M12A domain. 2 cysteine pairs are disulfide-bonded: C137-C289 and C160-C179. Residue H187 participates in Zn(2+) binding. Residue E188 is part of the active site. Residues H191 and H197 each coordinate Zn(2+). The tract at residues 291-315 (GVSGNNNNNNNNQINSNSIVNHPQV) is disordered.

The cofactor is Zn(2+). As to expression, digestive tract. Found in the pharynx cells of the procorpus, metacorpus, isthmus and terminal bulb, and in the terminal bulb lumen.

The protein resides in the secreted. Its function is as follows. Metalloprotease. May be involved in digestion. The chain is Zinc metalloproteinase nas-4 (nas-4) from Caenorhabditis elegans.